Reading from the N-terminus, the 236-residue chain is UPF0257 lipoprotein YnfC (236 aa).

An N-terminal signal peptide occupies residues methionine 1–glycine 16. Cysteine 17 carries N-palmitoyl cysteine lipidation. Residue cysteine 17 is the site of S-diacylglycerol cysteine attachment.

It belongs to the UPF0257 family.

The protein resides in the cell membrane. This is UPF0257 lipoprotein YnfC from Escherichia coli O157:H7.